We begin with the raw amino-acid sequence, 815 residues long: Phosphate transporter PHO1-2 (815 aa).

Residues 1–421 (MVKFSREYEA…QQPRNTHMIT (421 aa)) lie on the Cytoplasmic side of the membrane. The region spanning 2-368 (VKFSREYEAS…EQQRATDLFS (367 aa)) is the SPX domain. 3 disordered regions span residues 83–108 (SAGQ…STDK), 166–213 (RGLA…LELQ), and 242–266 (AGKK…GGGG). A compositionally biased stretch (basic and acidic residues) spans 97-108 (PDRGELVRSTDK). Over residues 183–201 (PPSSVHGSSGRYLLSGLSS) the composition is skewed to low complexity. A compositionally biased stretch (polar residues) spans 202-213 (PQSMSDGSLELQ). A compositionally biased stretch (basic and acidic residues) spans 243–254 (GKKDGKTKDGSG). The span at 255-266 (KGRGGGGGGGGG) shows a compositional bias: gly residues. A helical membrane pass occupies residues 422–442 (FLVGLFTGTFVSLFIIYAILA). Over 443–458 (HVSGIFTSTGNSAYME) the chain is Extracellular. A helical transmembrane segment spans residues 459–479 (IVYHVFSMFALISLHIFLYGC). Residues 480-508 (NLFMWKNTRINHNFIFDFSSNTALTHRDA) lie on the Cytoplasmic side of the membrane. A helical membrane pass occupies residues 509–529 (FLMSASIMCTVVAALVINLFL). At 530 to 538 (KNAGVAYAN) the chain is on the extracellular side. Residues 539–559 (ALPGALLLLSTGVLFCPFDIF) form a helical membrane-spanning segment. Topologically, residues 560-686 (YRSTRYCFMR…VRFKYAATPT (127 aa)) are cytoplasmic. Residues 624 to 815 (TSGQQYKHLA…PLPFRELETD (192 aa)) form the EXS domain. Residues 687–707 (PFWVWMVIISSSGATIYQLYW) traverse the membrane as a helical segment. The Extracellular portion of the chain corresponds to 708–734 (DFVKDWGFLNPKSKNRWLRNELILKNK). The chain crosses the membrane as a helical span at residues 735–751 (SIYYVSMMLNLALRLAW). Topologically, residues 752 to 815 (TESVMKIHIG…PLPFRELETD (64 aa)) are cytoplasmic.

It belongs to the SYG1 (TC 2.A.94) family. Specifically expressed in roots.

It is found in the cell membrane. Functionally, involved in the transfer of inorganic phosphate (Pi) from roots to shoots. This Oryza sativa subsp. japonica (Rice) protein is Phosphate transporter PHO1-2 (PHO1-2).